The sequence spans 538 residues: Protein NRT1/ PTR FAMILY 5.11 (538 aa).

Helical transmembrane passes span 44–64 (FAYF…LGES) and 74–94 (AWTG…DSYL). Phosphothreonine is present on T99. Helical transmembrane passes span 100–120 (IIIS…STMI), 134–154 (TIFF…NPCI), 175–194 (SFFN…TRLV), 204–224 (WSLG…LFLL), 308–328 (IPIW…PTFF), 342–362 (GLLV…VVFI), 389–409 (IGTG…VETK), 424–444 (VWWL…TMVG), 463–483 (ALNL…ISVI), and 507–527 (YFYW…LWFA).

Belongs to the major facilitator superfamily. Proton-dependent oligopeptide transporter (POT/PTR) (TC 2.A.17) family. Expressed in shoots and roots.

Its subcellular location is the membrane. The protein is Protein NRT1/ PTR FAMILY 5.11 (NPF5.11) of Arabidopsis thaliana (Mouse-ear cress).